Here is a 158-residue protein sequence, read N- to C-terminus: NAD(P)H-quinone oxidoreductase subunit J, chloroplastic (158 aa).

Belongs to the complex I 30 kDa subunit family. NDH is composed of at least 16 different subunits, 5 of which are encoded in the nucleus.

The protein localises to the plastid. It is found in the chloroplast thylakoid membrane. It carries out the reaction a plastoquinone + NADH + (n+1) H(+)(in) = a plastoquinol + NAD(+) + n H(+)(out). It catalyses the reaction a plastoquinone + NADPH + (n+1) H(+)(in) = a plastoquinol + NADP(+) + n H(+)(out). Its function is as follows. NDH shuttles electrons from NAD(P)H:plastoquinone, via FMN and iron-sulfur (Fe-S) centers, to quinones in the photosynthetic chain and possibly in a chloroplast respiratory chain. The immediate electron acceptor for the enzyme in this species is believed to be plastoquinone. Couples the redox reaction to proton translocation, and thus conserves the redox energy in a proton gradient. This is NAD(P)H-quinone oxidoreductase subunit J, chloroplastic from Piper cenocladum (Ant piper).